The chain runs to 157 residues: MEQKKTRVTIVGSVYAQPGTQFVYMGRADQCESCTIARVCHNLESGRRYEVVAIRAASHRCPVHHGGAVTVDVAEAPVEMRVSPDIARKNTTIVVKFPECDEACETFAACHPIGVVEGQKYIITDVLEGEAAPCRTGPSPVLVRVVPLPEGLPRYTP.

The protein belongs to the UPF0179 family.

The protein is UPF0179 protein Mhun_1135 of Methanospirillum hungatei JF-1 (strain ATCC 27890 / DSM 864 / NBRC 100397 / JF-1).